The following is a 486-amino-acid chain: Mogroside I-E synthase (486 aa).

UDP-alpha-D-glucose is bound by residues serine 302, cysteine 360, glutamine 362, tryptophan 380, asparagine 381, serine 382, glutamate 385, aspartate 401, and glutamine 402.

The protein belongs to the UDP-glycosyltransferase family. As to expression, highly expressed in young fruits 15 days after anthesis (15-DAA).

The catalysed reaction is mogrol + UDP-alpha-D-glucose = mogroside IE + UDP + H(+). It carries out the reaction mogroside I-A1 + UDP-alpha-D-glucose = mogroside IIE + UDP + H(+). The enzyme catalyses mogroside II-A1 + UDP-alpha-D-glucose = mogroside IIIX + UDP + H(+). It catalyses the reaction mogroside II-A + UDP-alpha-D-glucose = mogroside III + UDP + H(+). It participates in secondary metabolite biosynthesis; terpenoid biosynthesis. Its function is as follows. UDP-glycosyltransferase involved in the biosynthesis of cucurbitacin and mogroside tetracyclic triterpene natural products (e.g. siamenoside I and mogrosides IV, V and VI). Cucurbitacins have cytotoxic properties and exhibit deterrent taste as a defense barrier against herbivores. Mogrosides are nonsugar highly oxygenated compounds used as high-intensity zero-calorie sweeteners; they also possess pharmacological properties such as regulating immunity, lowering blood sugar and lipid levels, protecting the liver, and acting as antioxidants and antitumor agents. Catalyzes the C3 primary glucosylation of mogrol, mogroside I-A1, mogroside II-A1 and mogroside II-A. The protein is Mogroside I-E synthase of Siraitia grosvenorii (Monk's fruit).